A 100-amino-acid polypeptide reads, in one-letter code: Small ribosomal subunit protein uS14c (100 aa).

The protein belongs to the universal ribosomal protein uS14 family. In terms of assembly, part of the 30S ribosomal subunit.

It localises to the plastid. The protein resides in the chloroplast. Functionally, binds 16S rRNA, required for the assembly of 30S particles. The sequence is that of Small ribosomal subunit protein uS14c from Glycine max (Soybean).